The chain runs to 242 residues: UPF0273 protein TM_0370 (242 aa).

Positions 3 to 242 (KRVKTGIPGM…IYPSEGGEGR (240 aa)) constitute a KaiC domain. 30–37 (GGPGTGKT) lines the ATP pocket.

This sequence belongs to the UPF0273 family.

The polypeptide is UPF0273 protein TM_0370 (Thermotoga maritima (strain ATCC 43589 / DSM 3109 / JCM 10099 / NBRC 100826 / MSB8)).